We begin with the raw amino-acid sequence, 226 residues long: Ribonuclease 3 (226 aa).

The RNase III domain maps to 6–128; the sequence is INRLQRKLGY…LIGGVFLDSD (123 aa). Residue Glu-41 coordinates Mg(2+). The active site involves Asp-45. Mg(2+) is bound by residues Asp-114 and Glu-117. The active site involves Glu-117. Residues 155 to 225 enclose the DRBM domain; sequence DPKTRLQEYL…AEQALKKLEL (71 aa).

It belongs to the ribonuclease III family. As to quaternary structure, homodimer. It depends on Mg(2+) as a cofactor.

The protein resides in the cytoplasm. It catalyses the reaction Endonucleolytic cleavage to 5'-phosphomonoester.. In terms of biological role, digests double-stranded RNA. Involved in the processing of primary rRNA transcript to yield the immediate precursors to the large and small rRNAs (23S and 16S). Processes some mRNAs, and tRNAs when they are encoded in the rRNA operon. Processes pre-crRNA and tracrRNA of type II CRISPR loci if present in the organism. This is Ribonuclease 3 from Escherichia coli O139:H28 (strain E24377A / ETEC).